A 279-amino-acid polypeptide reads, in one-letter code: uncharacterized protein (279 aa).

Residues 233–279 (NDHQLHDSPLCSDVSDSTSNNNYDESLNFSNDNNNSSFNDFDDDNFI) are disordered. The span at 246–259 (VSDSTSNNNYDESL) shows a compositional bias: polar residues. Over residues 260 to 271 (NFSNDNNNSSFN) the composition is skewed to low complexity.

This is an uncharacterized protein from Buchnera aphidicola subsp. Baizongia pistaciae (strain Bp).